A 1488-amino-acid polypeptide reads, in one-letter code: Chromosome partition protein MukB (1488 aa).

34 to 41 (GGNGAGKS) lines the ATP pocket. Coiled-coil stretches lie at residues 326–418 (LEAD…QYNQ), 444–472 (LDTF…QTAH), and 509–602 (RHLA…RRAP). Residues 666 to 783 (PGGAEDQRLN…SLPIFGRAAR (118 aa)) form a flexible hinge region. 3 coiled-coil regions span residues 835–923 (EAEI…AKLE), 977–1116 (EMLS…AKAG), and 1209–1265 (VEAI…LQSV). The disordered stretch occupies residues 1049–1074 (ADSGAEERARQRRDELHAQLSNNRSR). The segment covering 1051–1065 (SGAEERARQRRDELH) has biased composition (basic and acidic residues).

The protein belongs to the SMC family. MukB subfamily. In terms of assembly, homodimerization via its hinge domain. Binds to DNA via its C-terminal region. Interacts, and probably forms a ternary complex, with MukE and MukF via its C-terminal region. The complex formation is stimulated by calcium or magnesium. Interacts with tubulin-related protein FtsZ.

Its subcellular location is the cytoplasm. It localises to the nucleoid. In terms of biological role, plays a central role in chromosome condensation, segregation and cell cycle progression. Functions as a homodimer, which is essential for chromosome partition. Involved in negative DNA supercoiling in vivo, and by this means organize and compact chromosomes. May achieve or facilitate chromosome segregation by condensation DNA from both sides of a centrally located replisome during cell division. In Salmonella heidelberg (strain SL476), this protein is Chromosome partition protein MukB.